A 134-amino-acid polypeptide reads, in one-letter code: Small ribosomal subunit protein uS8c (134 aa).

It belongs to the universal ribosomal protein uS8 family. As to quaternary structure, part of the 30S ribosomal subunit.

It is found in the plastid. Its subcellular location is the chloroplast. One of the primary rRNA binding proteins, it binds directly to 16S rRNA central domain where it helps coordinate assembly of the platform of the 30S subunit. The sequence is that of Small ribosomal subunit protein uS8c (rps8) from Daucus carota (Wild carrot).